Consider the following 196-residue polypeptide: DnaA initiator-associating protein DiaA (196 aa).

Residues 34-196 (LVQSLLNGNK…DNTLFPHQND (163 aa)) form the SIS domain.

It belongs to the SIS family. DiaA subfamily. As to quaternary structure, homotetramer; dimer of dimers.

Required for the timely initiation of chromosomal replication via direct interactions with the DnaA initiator protein. The protein is DnaA initiator-associating protein DiaA of Yersinia pestis bv. Antiqua (strain Antiqua).